Here is a 253-residue protein sequence, read N- to C-terminus: 3-deoxy-manno-octulosonate cytidylyltransferase (253 aa).

It belongs to the KdsB family.

It is found in the cytoplasm. It catalyses the reaction 3-deoxy-alpha-D-manno-oct-2-ulosonate + CTP = CMP-3-deoxy-beta-D-manno-octulosonate + diphosphate. It participates in nucleotide-sugar biosynthesis; CMP-3-deoxy-D-manno-octulosonate biosynthesis; CMP-3-deoxy-D-manno-octulosonate from 3-deoxy-D-manno-octulosonate and CTP: step 1/1. It functions in the pathway bacterial outer membrane biogenesis; lipopolysaccharide biosynthesis. Its function is as follows. Activates KDO (a required 8-carbon sugar) for incorporation into bacterial lipopolysaccharide in Gram-negative bacteria. This chain is 3-deoxy-manno-octulosonate cytidylyltransferase, found in Edwardsiella ictaluri (strain 93-146).